The primary structure comprises 338 residues: DNA-directed RNA polymerase subunit alpha (338 aa).

The tract at residues 1–233 (MYKNWRELIK…EQLQIFINFD (233 aa)) is alpha N-terminal domain (alpha-NTD). The interval 250-338 (INENLYRSVE…KMIQEGKEDL (89 aa)) is alpha C-terminal domain (alpha-CTD).

Belongs to the RNA polymerase alpha chain family. As to quaternary structure, homodimer. The RNAP catalytic core consists of 2 alpha, 1 beta, 1 beta' and 1 omega subunit. When a sigma factor is associated with the core the holoenzyme is formed, which can initiate transcription.

The enzyme catalyses RNA(n) + a ribonucleoside 5'-triphosphate = RNA(n+1) + diphosphate. Its function is as follows. DNA-dependent RNA polymerase catalyzes the transcription of DNA into RNA using the four ribonucleoside triphosphates as substrates. The sequence is that of DNA-directed RNA polymerase subunit alpha from Syntrophotalea carbinolica (strain DSM 2380 / NBRC 103641 / GraBd1) (Pelobacter carbinolicus).